The chain runs to 303 residues: Sulfate adenylyltransferase subunit 2 (303 aa).

The tract at residues 282–303 (SGRLIDHDESGSMEKKKREGYF) is disordered.

The protein belongs to the PAPS reductase family. CysD subfamily. Heterodimer composed of CysD, the smaller subunit, and CysN.

The enzyme catalyses sulfate + ATP + H(+) = adenosine 5'-phosphosulfate + diphosphate. Its pathway is sulfur metabolism; hydrogen sulfide biosynthesis; sulfite from sulfate: step 1/3. Functionally, with CysN forms the ATP sulfurylase (ATPS) that catalyzes the adenylation of sulfate producing adenosine 5'-phosphosulfate (APS) and diphosphate, the first enzymatic step in sulfur assimilation pathway. APS synthesis involves the formation of a high-energy phosphoric-sulfuric acid anhydride bond driven by GTP hydrolysis by CysN coupled to ATP hydrolysis by CysD. The protein is Sulfate adenylyltransferase subunit 2 of Maricaulis maris (strain MCS10) (Caulobacter maris).